The primary structure comprises 278 residues: Leucine-rich repeat-containing protein 10 (278 aa).

LRR repeat units follow at residues 30–51, 52–74, 76–97, 98–121, 123–143, 144–166, 167–189, and 191–213; these read LDRMVDLSGSQLRRFPVHVCSF, QELVKLYLSDNRLNSLPPELGQL, NLQILALDFNNFKALPQVVCTL, KQLCILYLGNNKLCDLPRELSLLQ, LRTLWVEANYLTKLPEVVCEL, SLLKTLHAGSNALRLLPGQLQRL, RELRTIWLSGNLLTDFPPVLLHM, and FLEIIDVDRNSIRYFPSLAHLSS. The span at 239–250 shows a compositional bias: basic and acidic residues; sequence RWAEETPEPDPR. The segment at 239–278 is disordered; the sequence is RWAEETPEPDPRKARRYALAREESQEAQLPALPPLPPTNS. Pro residues predominate over residues 269–278; it reads ALPPLPPTNS.

The protein resides in the nucleus. Its function is as follows. May play important roles in cardiac development and/or cardiac function. This Bos taurus (Bovine) protein is Leucine-rich repeat-containing protein 10 (LRRC10).